Reading from the N-terminus, the 250-residue chain is MSHLTTCLVFFLLAFVTYTNASGVFEVHNNCPYTVWAAATPIGGGRRLERGQSWWFWAPPGTKMARIWGRTNCNFDGAGRGWCQTGDCGGVLECKGWGKPPNTLAEYALNQFSNLDFWDISVIDGFNIPMSFGPTNPGPGKCHPIQCVANINGECPGSLRVPGGCNNPCTTFGGQQYCCTQGPCGPTDLSRFFKQRCPDAYSYPQDDPTSTFTCQSWTTDYKVMFCPYGSTHNETTNFPLEMPTSTLEVA.

The signal sequence occupies residues 1 to 21 (MSHLTTCLVFFLLAFVTYTNA). 8 disulfides stabilise this stretch: C31–C226, C73–C83, C88–C94, C142–C214, C147–C197, C155–C165, C169–C178, and C179–C184.

The protein belongs to the thaumatin family.

In Solanum commersonii (Commerson's wild potato), this protein is Osmotin-like protein OSML15.